The sequence spans 223 residues: Small heat shock protein hspI, mitochondrial (223 aa).

The transit peptide at 1–23 directs the protein to the mitochondrion; the sequence is MYKLSKTTPFFFRRAFLCGRRGG. Residues 109 to 223 form the sHSP domain; it reads KTRGFRSPKT…YVKSTTINVQ (115 aa).

The protein belongs to the small heat shock protein (HSP20) family.

Its subcellular location is the mitochondrion. The sequence is that of Small heat shock protein hspI, mitochondrial (hspI) from Dictyostelium discoideum (Social amoeba).